The chain runs to 344 residues: Autophagy-related protein 14 (344 aa).

The cysteine repeats stretch occupies residues 3–18 (CPICHHRAHVVYCAHC). Residues 26-156 (LLKLKLDLIL…VSKICESVRD (131 aa)) are a coiled coil.

This sequence belongs to the ATG14 family. Component of the autophagy-specific VPS34 PI3-kinase complex I composed of VPS15, VPS30, VPS34 and ATG14.

It localises to the preautophagosomal structure membrane. Its subcellular location is the vacuole membrane. Required for cytoplasm to vacuole transport (Cvt) and autophagy as a part of the autophagy-specific VPS34 PI3-kinase complex I. This complex is essential to recruit the ATG8-phosphatidylinositol conjugate and the ATG12-ATG5 conjugate to the pre-autophagosomal structure. ATG14 mediates the specific binding of the VPS34 PI3-kinase complex I to the preautophagosomal structure (PAS). The protein is Autophagy-related protein 14 (ATG14) of Saccharomyces cerevisiae (strain YJM789) (Baker's yeast).